The following is a 252-amino-acid chain: Trans-aconitate 2-methyltransferase (252 aa).

It belongs to the methyltransferase superfamily. Tam family.

Its subcellular location is the cytoplasm. The enzyme catalyses trans-aconitate + S-adenosyl-L-methionine = (E)-3-(methoxycarbonyl)pent-2-enedioate + S-adenosyl-L-homocysteine. In terms of biological role, catalyzes the S-adenosylmethionine monomethyl esterification of trans-aconitate. In Shigella dysenteriae serotype 1 (strain Sd197), this protein is Trans-aconitate 2-methyltransferase.